The following is a 339-amino-acid chain: Exopolyphosphatase 1 (339 aa).

Residues Gln315–Thr339 form a disordered region. Positions Arg319–Thr339 are enriched in basic and acidic residues.

The protein belongs to the GppA/Ppx family. As to quaternary structure, homodimer.

The catalysed reaction is [phosphate](n) + H2O = [phosphate](n-1) + phosphate + H(+). In terms of biological role, degradation of inorganic polyphosphates (polyP). Releases orthophosphate processively from the ends of the polyP chain. This Mycobacterium leprae (strain TN) protein is Exopolyphosphatase 1.